Reading from the N-terminus, the 244-residue chain is NAD(P)H-quinone oxidoreductase subunit K (244 aa).

Residues C60, C61, C125, and C156 each coordinate [4Fe-4S] cluster.

It belongs to the complex I 20 kDa subunit family. NDH-1 can be composed of about 15 different subunits; different subcomplexes with different compositions have been identified which probably have different functions. The cofactor is [4Fe-4S] cluster.

It localises to the cellular thylakoid membrane. It catalyses the reaction a plastoquinone + NADH + (n+1) H(+)(in) = a plastoquinol + NAD(+) + n H(+)(out). The catalysed reaction is a plastoquinone + NADPH + (n+1) H(+)(in) = a plastoquinol + NADP(+) + n H(+)(out). NDH-1 shuttles electrons from an unknown electron donor, via FMN and iron-sulfur (Fe-S) centers, to quinones in the respiratory and/or the photosynthetic chain. The immediate electron acceptor for the enzyme in this species is believed to be plastoquinone. Couples the redox reaction to proton translocation, and thus conserves the redox energy in a proton gradient. Cyanobacterial NDH-1 also plays a role in inorganic carbon-concentration. The chain is NAD(P)H-quinone oxidoreductase subunit K from Prochlorococcus marinus (strain AS9601).